We begin with the raw amino-acid sequence, 213 residues long: Thymidylate kinase (213 aa).

Residue 10–17 (GLEGAGKT) participates in ATP binding.

This sequence belongs to the thymidylate kinase family.

It carries out the reaction dTMP + ATP = dTDP + ADP. In terms of biological role, phosphorylation of dTMP to form dTDP in both de novo and salvage pathways of dTTP synthesis. The chain is Thymidylate kinase from Escherichia coli O6:H1 (strain CFT073 / ATCC 700928 / UPEC).